Here is a 587-residue protein sequence, read N- to C-terminus: Proteasome-associated ATPase (587 aa).

Positions 1–94 (MAARDDAEAR…KEEVDRLAQP (94 aa)) form a coiled coil. An ATP-binding site is contributed by 276–281 (GCGKTL). Positions 586-587 (YL) are docks into pockets in the proteasome alpha-ring.

Belongs to the AAA ATPase family. As to quaternary structure, homohexamer. Assembles into a hexameric ring structure that caps the 20S proteasome core. Strongly interacts with the prokaryotic ubiquitin-like protein Pup through a hydrophobic interface; the interacting region of ARC lies in its N-terminal coiled-coil domain. There is one Pup binding site per ARC hexamer ring. Upon ATP-binding, the C-terminus of ARC interacts with the alpha-rings of the proteasome core, possibly by binding to the intersubunit pockets.

The protein operates within protein degradation; proteasomal Pup-dependent pathway. ATPase which is responsible for recognizing, binding, unfolding and translocation of pupylated proteins into the bacterial 20S proteasome core particle. May be essential for opening the gate of the 20S proteasome via an interaction with its C-terminus, thereby allowing substrate entry and access to the site of proteolysis. Thus, the C-termini of the proteasomal ATPase may function like a 'key in a lock' to induce gate opening and therefore regulate proteolysis. The sequence is that of Proteasome-associated ATPase from Streptosporangium roseum (strain ATCC 12428 / DSM 43021 / JCM 3005 / KCTC 9067 / NCIMB 10171 / NRRL 2505 / NI 9100).